A 180-amino-acid chain; its full sequence is Alkyl hydroperoxide reductase AhpD (180 aa).

Residue Cys131 is the Proton donor of the active site. Cys131 and Cys134 are oxidised to a cystine. Catalysis depends on Cys134, which acts as the Cysteine sulfenic acid (-SOH) intermediate.

The protein belongs to the AhpD family.

The catalysed reaction is N(6)-[(R)-dihydrolipoyl]-L-lysyl-[lipoyl-carrier protein] + a hydroperoxide = N(6)-[(R)-lipoyl]-L-lysyl-[lipoyl-carrier protein] + an alcohol + H2O. Functionally, antioxidant protein with alkyl hydroperoxidase activity. Required for the reduction of the AhpC active site cysteine residues and for the regeneration of the AhpC enzyme activity. In Hyphomonas neptunium (strain ATCC 15444), this protein is Alkyl hydroperoxide reductase AhpD.